An 827-amino-acid chain; its full sequence is Multiphosphoryl transfer protein (827 aa).

The PTS EIIA type-2 domain occupies 2–142 (IPLTSELVAI…AVIVARLTGA (141 aa)). The active-site Tele-phosphohistidine intermediate; for EIIA activity is the H62. H62 carries the post-translational modification Phosphohistidine; by HPr. An HPr domain is found at 157–245 (AQGIDVVVTG…AFEAGLEDEE (89 aa)). H171 serves as the catalytic Pros-phosphohistidine intermediate; for HPr activity. Position 171 is a phosphohistidine; by EI (H171). The PTS EI stretch occupies residues 270-827 (EGRTLVGISS…TTAAEVRGLK (558 aa)). The active-site Tele-phosphohistidine intermediate; for PTS EI activity is H457. Phosphohistidine; by autocatalysis is present on H457. R564 and R600 together coordinate phosphoenolpyruvate. The Mg(2+) site is built by E693 and D717. Phosphoenolpyruvate contacts are provided by residues 716–717 (ND) and R727. The active-site Proton donor is the C764.

This sequence belongs to the PEP-utilizing enzyme family. Requires Mg(2+) as cofactor.

It is found in the cytoplasm. It carries out the reaction L-histidyl-[protein] + phosphoenolpyruvate = N(pros)-phospho-L-histidyl-[protein] + pyruvate. In terms of biological role, the phosphoenolpyruvate-dependent sugar phosphotransferase system (sugar PTS), a major carbohydrate active transport system, catalyzes the phosphorylation of incoming sugar substrates concomitantly with their translocation across the cell membrane. The enzyme II FruAB PTS system is involved in fructose transport. In Rhodobacter capsulatus (Rhodopseudomonas capsulata), this protein is Multiphosphoryl transfer protein.